The following is a 280-amino-acid chain: Urease accessory protein UreD 1 (280 aa).

This sequence belongs to the UreD family. As to quaternary structure, ureD, UreF and UreG form a complex that acts as a GTP-hydrolysis-dependent molecular chaperone, activating the urease apoprotein by helping to assemble the nickel containing metallocenter of UreC. The UreE protein probably delivers the nickel.

Its subcellular location is the cytoplasm. Its function is as follows. Required for maturation of urease via the functional incorporation of the urease nickel metallocenter. In Bradyrhizobium sp. (strain BTAi1 / ATCC BAA-1182), this protein is Urease accessory protein UreD 1.